The sequence spans 1003 residues: Methyl-CpG-binding domain protein 6 (1003 aa).

Residues 11-81 enclose the MBD domain; that stretch reads DRAGGPVATS…KVFNFDPLAP (71 aa). The segment at 57 to 68 is required for interaction with ASXL1/2/3; that stretch reads DGTCKCGLECPL. 3 disordered regions span residues 120–219, 238–664, and 683–1003; these read TCSH…PPPA, VPSD…PLLF, and ATLD…KLAP. Composition is skewed to pro residues over residues 140–155 and 268–287; these read PGPPSARPPCRVPPTT and TPPPLPPSNNLPAHPGPASQ. Composition is skewed to low complexity over residues 297 to 308, 319 to 328, and 348 to 361; these read LPLVLGPLGGAP, LASSLLSAAA, and AQAPSASHSSSLRP. A compositionally biased stretch (pro residues) spans 391–407; that stretch reads APAPVPQPFSLPEPSQP. Residues 408–426 are compositionally biased toward low complexity; the sequence is ILPSVLSLLGLPTPGPSHS. Over residues 439–456 the composition is skewed to pro residues; sequence LPPPPTLSSGSPPQPRHP. Composition is skewed to low complexity over residues 460-498 and 531-548; these read SLPGTTSGSLSSVPGAPAPPAASKAPVVPSPVLQSPSEG and GAGFPGMLGALPLPLSLG. Residues 570-589 are compositionally biased toward pro residues; sequence QPPPEPLLPPPGGPGPPLAP. Residues 590 to 602 are compositionally biased toward low complexity; the sequence is GEPEGPSLLVASL. A compositionally biased stretch (pro residues) spans 603–617; that stretch reads LPPPPSDLLPPPSAP. Residues 618-633 are compositionally biased toward low complexity; that stretch reads PSNLLASFLPLLALGP. Over residues 635–649 the composition is skewed to gly residues; the sequence is AGDGEGSAEGAGGPS. A compositionally biased stretch (low complexity) spans 650-662; sequence GEPFSGLGDLSPL. Positions 707 to 718 are enriched in polar residues; that stretch reads TSSVTTATTDPG. 3 stretches are compositionally biased toward low complexity: residues 732–761, 768–778, and 788–798; these read PPQLLSPLLGASLLGDLSSLTSSPGALPSL, LLSGQLGLQLL, and SEASSPLACLL. The segment covering 805–817 has biased composition (pro residues); the sequence is PEQPEAPCLPPES. Low complexity predominate over residues 818 to 837; the sequence is PASALEPEPARPPLSALAPP. Residues 947 to 958 show a composition bias toward basic residues; sequence RKSRRGRRRKYN. Polar residues predominate over residues 959–969; it reads PTRNSNSSRQD. A compositionally biased stretch (basic residues) spans 989–1003; it reads RPGRPAKNKRRKLAP.

In terms of assembly, core component of the polycomb repressive deubiquitinase (PR-DUB) complex, at least composed of BAP1, one of ASXL1, ASXL2 or (probably) ASXL3, and one of MBD5 or MBD6. Distinct combinations of ASXL and MBD proteins may preferentially bind specific histone modification marks. The PR-DUB core associates with a number of accessory proteins, including FOXK1, FOXK2, KDM1B, HCFC1 and OGT; KDM1B specifically associates with ASXL2 PR-DUB complexes. Interacts (via MBD domain) with ASXL1, ASXL2 and ASXL3 (via PHD domain); the interaction is probably direct, mediates association with other PR-DUB complex core components.

The protein localises to the nucleus. It is found in the chromosome. In terms of biological role, non-catalytic component of the polycomb repressive deubiquitinase (PR-DUB) complex, a complex that specifically mediates deubiquitination of histone H2A monoubiquitinated at 'Lys-120' (H2AK119ub1). Important for stability of PR-DUB components and stimulating its ubiquitinase activity. As part of the PR-DUB complex, associates with chromatin enriched in histone marks H3K4me1, H3K4me3, and H3K27Ac, but not in H3K27me3. MBD5 and MBD6 containing complexes associate with distinct chromatin regions enriched in genes involved in different pathways. Heterochromatin recruitment is not mediated by DNA methylation. The PR-DUB complex is an epigenetic regulator of gene expression, including genes involved in development, cell communication, signaling, cell proliferation and cell viability; may promote cancer cell growth. The polypeptide is Methyl-CpG-binding domain protein 6 (MBD6) (Homo sapiens (Human)).